Here is an 89-residue protein sequence, read N- to C-terminus: Small ribosomal subunit protein uS17 (89 aa).

Belongs to the universal ribosomal protein uS17 family. In terms of assembly, part of the 30S ribosomal subunit.

One of the primary rRNA binding proteins, it binds specifically to the 5'-end of 16S ribosomal RNA. In Ralstonia pickettii (strain 12J), this protein is Small ribosomal subunit protein uS17.